A 400-amino-acid chain; its full sequence is CCA-adding enzyme (400 aa).

The ATP site is built by glycine 8 and arginine 11. Positions 8 and 11 each coordinate CTP. Mg(2+)-binding residues include aspartate 21 and aspartate 23. 3 residues coordinate ATP: arginine 91, arginine 137, and arginine 140. Arginine 91, arginine 137, and arginine 140 together coordinate CTP. One can recognise an HD domain in the interval 217–322 (NFQYAMTALK…IDLFNKWDVW (106 aa)).

It belongs to the tRNA nucleotidyltransferase/poly(A) polymerase family. Bacterial CCA-adding enzyme type 2 subfamily. Requires Mg(2+) as cofactor.

The enzyme catalyses a tRNA precursor + 2 CTP + ATP = a tRNA with a 3' CCA end + 3 diphosphate. It carries out the reaction a tRNA with a 3' CCA end + 2 CTP + ATP = a tRNA with a 3' CCACCA end + 3 diphosphate. Its function is as follows. Catalyzes the addition and repair of the essential 3'-terminal CCA sequence in tRNAs without using a nucleic acid template. Adds these three nucleotides in the order of C, C, and A to the tRNA nucleotide-73, using CTP and ATP as substrates and producing inorganic pyrophosphate. tRNA 3'-terminal CCA addition is required both for tRNA processing and repair. Also involved in tRNA surveillance by mediating tandem CCA addition to generate a CCACCA at the 3' terminus of unstable tRNAs. While stable tRNAs receive only 3'-terminal CCA, unstable tRNAs are marked with CCACCA and rapidly degraded. The sequence is that of CCA-adding enzyme from Actinobacillus succinogenes (strain ATCC 55618 / DSM 22257 / CCUG 43843 / 130Z).